Here is a 561-residue protein sequence, read N- to C-terminus: MAANEYDYIIVGAGSAGNVLASRLAEDADVTVLLLEAGGPDYRFDFRTQMPAALAYPLQGRRYNWAYETDPEPHMNNRRMECGRGKGLGGSSLINGMCYIRGNALDYDGWAAHAGLENWTYLDCLPYFRKAETRDIGANAYHGGDGPVHVTTSKPGNNPLFAAMVEAGVQAGFPRTDDLNGYQQEGFGPMDRTVTANGRRASTARGYLDRAKARPNLTIVTHAVTDRVLFSGKRAVGVSYLHHGNVLNAQARREVLVCSGAIASPQLLQRSGVGRSTWLRELDVPLVHDLPGVGENLQDHLEMYIQYECKEPVSLYPALQWWNQPAIGLEWMLNGTGIGASNQFEAGGFIRTRDDDPWPNIQYHFLPVAINYNGSNAIRMHGFQAHVGSMRSPSRGRVKLTSRDPNAHPGILFNYMADPLDWREFRDGIRITREIMRQPALDRYRGRELNPGAELTTDEQLDSFVRMRAETAFHPSCSCKMGYDDMAVVDNEGRVHGMQGLRVVDASIMPRITTGNLNAPTIMLAEKIADRIRGREALARVDTPYFVANGVASRKRESATV.

Residue 7-36 (DYIIVGAGSAGNVLASRLAEDADVTVLLLE) coordinates FAD. Histidine 474 functions as the Proton acceptor in the catalytic mechanism.

This sequence belongs to the GMC oxidoreductase family. FAD is required as a cofactor.

The enzyme catalyses choline + A = betaine aldehyde + AH2. The catalysed reaction is betaine aldehyde + NAD(+) + H2O = glycine betaine + NADH + 2 H(+). The protein operates within amine and polyamine biosynthesis; betaine biosynthesis via choline pathway; betaine aldehyde from choline (cytochrome c reductase route): step 1/1. Involved in the biosynthesis of the osmoprotectant glycine betaine. Catalyzes the oxidation of choline to betaine aldehyde and betaine aldehyde to glycine betaine at the same rate. The chain is Oxygen-dependent choline dehydrogenase from Paraburkholderia xenovorans (strain LB400).